The chain runs to 184 residues: Photosystem I assembly protein Ycf4 (184 aa).

Transmembrane regions (helical) follow at residues 21 to 43 (NFCWACILFLGSLGFLLVGTSSY) and 58 to 80 (IFFPQGIVMSFYGIAGLFISSYL).

Belongs to the Ycf4 family.

It is found in the plastid. Its subcellular location is the chloroplast thylakoid membrane. Its function is as follows. Seems to be required for the assembly of the photosystem I complex. The sequence is that of Photosystem I assembly protein Ycf4 from Calycanthus floridus var. glaucus (Eastern sweetshrub).